Consider the following 577-residue polypeptide: Outer spore wall assembly protein SHE10 (577 aa).

The signal sequence occupies residues M1 to E23. Coiled coils occupy residues N379 to E416 and I513 to V561. Residues R525–R545 show a composition bias toward basic and acidic residues. The interval R525–L577 is disordered. Low complexity predominate over residues S562–L577.

Belongs to the SHE10 family. Component of the mitochondria-localized RNase mitochondrial RNA-processing (RNase MRP) composed of one single RNA encoded by the NME1 gene and at least 31 proteins. Absent in the nucleus-localized RNase MRP (NuMRP).

The protein localises to the mitochondrion. Its function is as follows. Involved in spore wall assembly. May be a component of the mitochondrial RNase MRP (MtMRP), a ribonucleoprotein endoribonuclease involved in the cleaving RNA transcripts to generate primers for DNA replication in mitochondria. In Saccharomyces cerevisiae (strain Lalvin EC1118 / Prise de mousse) (Baker's yeast), this protein is Outer spore wall assembly protein SHE10.